Reading from the N-terminus, the 124-residue chain is Glutaredoxin-2 (124 aa).

A disulfide bond links Cys-13 and Cys-16.

This sequence belongs to the glutaredoxin family. In terms of assembly, homodimer.

It is found in the host cytoplasm. In terms of biological role, glutaredoxin necessary for virion morphogenesis and virus replication. Functions as a thiol-disulfide transfer protein between membrane-associated OPG128 and substrates OPG095 or OPG053. The complete pathway for formation of disulfide bonds in intracellular virion membrane proteins sequentially involves oxidation of OPG072, OPG128 and OPG088. Exhibit thioltransferase and dehydroascorbate reductase activities in vitro. This Bos taurus (Bovine) protein is Glutaredoxin-2 (OPG088).